Consider the following 312-residue polypeptide: Olfactory receptor 2L13 (312 aa).

Residues 1–24 (MEKWNHTSNDFILLGLLPPNQTGI) lie on the Extracellular side of the membrane. Asn5 and Asn20 each carry an N-linked (GlcNAc...) asparagine glycan. Residues 25-48 (FLLCLIILIFFLASVGNSAMIHLI) traverse the membrane as a helical segment. The Cytoplasmic portion of the chain corresponds to 49 to 56 (HVDPRLHT). Residues 57–78 (PMYFLLSQLSLMDLMYISTTVP) traverse the membrane as a helical segment. Over 79–99 (KMAYNFLSGQKGISFLGCGVQ) the chain is Extracellular. Cys96 and Cys188 are disulfide-bonded. The chain crosses the membrane as a helical span at residues 100–119 (SFFFLTMACSEGLLLTSMAY). The Cytoplasmic segment spans residues 120-138 (DRYLAICHSLYYPIRMSKM). Residues 139 to 157 (MCVKMIGGSWTLGSINSLA) traverse the membrane as a helical segment. Topologically, residues 158 to 194 (HTVFALHIPYCRSRAIDHFFCDVPAMLLLACTDTWVY) are extracellular. A helical transmembrane segment spans residues 195–218 (EYMVFVSTSLFLLFPFIGITSSCG). The Cytoplasmic segment spans residues 219 to 235 (RVLFAVYHMHSKEGRKK). The helical transmembrane segment at 236–258 (AFTTISTHLTVVIFYYAPFVYTY) threads the bilayer. Topologically, residues 259–271 (LRPRNLRSPAEDK) are extracellular. The helical transmembrane segment at 272-291 (ILAVFYTILTPMLNPIIYSL) threads the bilayer. Over 292-312 (RNKEVLGAMRRVFGIFSFLKE) the chain is Cytoplasmic.

It belongs to the G-protein coupled receptor 1 family.

Its subcellular location is the cell membrane. Odorant receptor. This is Olfactory receptor 2L13 (OR2L13) from Homo sapiens (Human).